The sequence spans 370 residues: tRNA-specific 2-thiouridylase MnmA (370 aa).

Residues 11–18 (GMSGGVDS) and methionine 37 contribute to the ATP site. The interval 97 to 99 (NPD) is interaction with target base in tRNA. The active-site Nucleophile is the cysteine 102. Cysteine 102 and cysteine 199 are joined by a disulfide. Glycine 126 provides a ligand contact to ATP. The segment at 149–151 (KDQ) is interaction with tRNA. Cysteine 199 (cysteine persulfide intermediate) is an active-site residue. The tract at residues 307-308 (RY) is interaction with tRNA.

This sequence belongs to the MnmA/TRMU family.

It localises to the cytoplasm. It catalyses the reaction S-sulfanyl-L-cysteinyl-[protein] + uridine(34) in tRNA + AH2 + ATP = 2-thiouridine(34) in tRNA + L-cysteinyl-[protein] + A + AMP + diphosphate + H(+). Its function is as follows. Catalyzes the 2-thiolation of uridine at the wobble position (U34) of tRNA, leading to the formation of s(2)U34. The protein is tRNA-specific 2-thiouridylase MnmA of Staphylococcus haemolyticus (strain JCSC1435).